Here is a 205-residue protein sequence, read N- to C-terminus: Putative 3-methyladenine DNA glycosylase (205 aa).

Belongs to the DNA glycosylase MPG family.

The protein is Putative 3-methyladenine DNA glycosylase of Bacillus cereus (strain ATCC 14579 / DSM 31 / CCUG 7414 / JCM 2152 / NBRC 15305 / NCIMB 9373 / NCTC 2599 / NRRL B-3711).